Consider the following 621-residue polypeptide: Kininogen-1 (621 aa).

Positions 1 to 18 are cleaved as a signal peptide; it reads MKLITILFLCSRLLPSLT. Residues 27 to 131 enclose the Cystatin kininogen-type 1 domain; it reads CNDQDVFKAV…IQTCLITPAE (105 aa). 9 disulfide bridges follow: Cys-27–Cys-591, Cys-82–Cys-93, Cys-106–Cys-125, Cys-141–Cys-144, Cys-205–Cys-217, Cys-228–Cys-247, Cys-263–Cys-266, Cys-327–Cys-339, and Cys-350–Cys-369. N-linked (GlcNAc...) asparagine glycans are attached at residues Asn-47 and Asn-87. Thr-136 carries O-linked (GalNAc...) threonine; partial glycosylation. The Cystatin kininogen-type 2 domain maps to 150–253; that stretch reads TKSPDLEPVL…SQKCDLYPVK (104 aa). N-linked (GlcNAc...) asparagine glycosylation is found at Asn-168 and Asn-169. Asn-197 carries N-linked (GlcNAc...) asparagine; partial glycosylation. A glycan (N-linked (GlcNAc...) asparagine) is linked at Asn-204. In terms of domain architecture, Cystatin kininogen-type 3 spans 272–375; sequence VDSPDLEEPL…TVNCQPLGQT (104 aa). The residue at position 331 (Ser-331) is a Phosphoserine. The tract at residues 396–497 is disordered; it reads EGSTTVSLPH…GKNNGKHYDW (102 aa). The O-linked (GalNAc...) serine glycan is linked to Ser-398. O-linked (GalNAc...) threonine glycans are attached at residues Thr-399 and Thr-400. The O-linked (GalNAc...) serine glycan is linked to Ser-406. Basic residues predominate over residues 444 to 492; the sequence is GHKHKHDQGHGHHGSHGLGHGHQKQHGLGHGHKHGHGHGKHKNKGKNNG. A glycan (O-linked (GalNAc...) serine) is linked at Ser-512. 6 O-linked (GalNAc...) threonine glycosylation sites follow: Thr-520, Thr-524, Thr-536, Thr-548, Thr-553, and Thr-570. Ser-581 carries O-linked (GalNAc...) serine glycosylation.

In terms of processing, bradykinin is released from kininogen by plasma kallikrein. Phosphorylated by FAM20C in the extracellular medium. Post-translationally, bradykinin is inactivated by ACE, which removes the dipeptide Arg-Phe from its C-terminus. Plasma.

It localises to the secreted. Its subcellular location is the extracellular space. Its function is as follows. Kininogens are inhibitors of thiol proteases. HMW-kininogen plays an important role in blood coagulation by helping to position optimally prekallikrein and factor XI next to factor XII; HMW-kininogen inhibits the thrombin- and plasmin-induced aggregation of thrombocytes. LMW-kininogen inhibits the aggregation of thrombocytes. LMW-kininogen is in contrast to HMW-kininogen not involved in blood clotting. In terms of biological role, the active peptide bradykinin is a potent vasodilatator that is released from HMW-kininogen shows a variety of physiological effects: (A) influence in smooth muscle contraction, (B) induction of hypotension, (C) natriuresis and diuresis, (D) decrease in blood glucose level, (E) it is a mediator of inflammation and causes (E1) increase in vascular permeability, (E2) stimulation of nociceptors (4E3) release of other mediators of inflammation (e.g. prostaglandins), (F) it has a cardioprotective effect (directly via bradykinin action, indirectly via endothelium-derived relaxing factor action). The chain is Kininogen-1 (KNG1) from Bos taurus (Bovine).